The sequence spans 343 residues: Protein RecA (343 aa).

Residue 65–72 coordinates ATP; sequence GPESSGKT.

This sequence belongs to the RecA family.

The protein localises to the cytoplasm. Functionally, can catalyze the hydrolysis of ATP in the presence of single-stranded DNA, the ATP-dependent uptake of single-stranded DNA by duplex DNA, and the ATP-dependent hybridization of homologous single-stranded DNAs. It interacts with LexA causing its activation and leading to its autocatalytic cleavage. The protein is Protein RecA of Campylobacter jejuni subsp. doylei (strain ATCC BAA-1458 / RM4099 / 269.97).